The following is a 634-amino-acid chain: 1-deoxy-D-xylulose-5-phosphate synthase (634 aa).

Residues His72 and 113–115 (GHS) each bind thiamine diphosphate. Asp144 contributes to the Mg(2+) binding site. Thiamine diphosphate contacts are provided by residues 145–146 (GA), Asn173, Tyr284, and Glu367. Residue Asn173 participates in Mg(2+) binding.

Belongs to the transketolase family. DXPS subfamily. As to quaternary structure, homodimer. Mg(2+) is required as a cofactor. The cofactor is thiamine diphosphate.

It catalyses the reaction D-glyceraldehyde 3-phosphate + pyruvate + H(+) = 1-deoxy-D-xylulose 5-phosphate + CO2. Its pathway is metabolic intermediate biosynthesis; 1-deoxy-D-xylulose 5-phosphate biosynthesis; 1-deoxy-D-xylulose 5-phosphate from D-glyceraldehyde 3-phosphate and pyruvate: step 1/1. Its function is as follows. Catalyzes the acyloin condensation reaction between C atoms 2 and 3 of pyruvate and glyceraldehyde 3-phosphate to yield 1-deoxy-D-xylulose-5-phosphate (DXP). In Listeria welshimeri serovar 6b (strain ATCC 35897 / DSM 20650 / CCUG 15529 / CIP 8149 / NCTC 11857 / SLCC 5334 / V8), this protein is 1-deoxy-D-xylulose-5-phosphate synthase.